We begin with the raw amino-acid sequence, 865 residues long: cGMP-specific 3',5'-cyclic phosphodiesterase (865 aa).

At Ser92 the chain carries Phosphoserine. 2 GAF domains span residues 154–304 (DVTA…GIVL) and 336–493 (SLEV…GLGI). In terms of domain architecture, PDEase spans 526-850 (ETRELQSLAA…QKWQALAEQQ (325 aa)). Residue His603 is the Proton donor of the active site. Residues His607, His643, Asp644, and Asp754 each coordinate Zn(2+). A Mg(2+)-binding site is contributed by Asp644. Residue Gln807 coordinates 3',5'-cyclic GMP.

Belongs to the cyclic nucleotide phosphodiesterase family. Zn(2+) is required as a cofactor. Requires Mg(2+) as cofactor. Post-translationally, phosphorylation is regulated by binding of cGMP to the two allosteric sites. Phosphorylation by PRKG1 leads to its activation.

It catalyses the reaction 3',5'-cyclic GMP + H2O = GMP + H(+). Its pathway is purine metabolism; 3',5'-cyclic GMP degradation; GMP from 3',5'-cyclic GMP: step 1/1. Its activity is regulated as follows. Most potently inhibited by zaprinast and dipyridamole. Its function is as follows. Plays a role in signal transduction by regulating the intracellular concentration of cyclic nucleotides. This phosphodiesterase catalyzes the specific hydrolysis of cGMP to 5'-GMP. Specifically regulates nitric-oxide-generated cGMP. The polypeptide is cGMP-specific 3',5'-cyclic phosphodiesterase (PDE5A) (Bos taurus (Bovine)).